The following is a 530-amino-acid chain: uncharacterized protein (530 aa).

Residues 362-408 (NLTPKLNKTNEDIKSDSTSQPQGFPEGNRRVMENPETKVSKTDDEEM) are disordered. Residues 388–403 (GNRRVMENPETKVSKT) show a composition bias toward basic and acidic residues.

Belongs to the IIV-6 030L family.

This is an uncharacterized protein from Invertebrate iridescent virus 6 (IIV-6).